Consider the following 26-residue polypeptide: Aldehyde dehydrogenase beta chain (26 aa).

Heterotrimer composed of an alpha, a beta and a gamma chain. FAD serves as cofactor.

The enzyme catalyses an aldehyde + a quinone + H2O = a quinol + a carboxylate + H(+). The sequence is that of Aldehyde dehydrogenase beta chain from Amycolatopsis methanolica.